Consider the following 422-residue polypeptide: Tyrosine--tRNA ligase (422 aa).

Tyr37 serves as a coordination point for L-tyrosine. A 'HIGH' region motif is present at residues 42–51 (PTEESLHIGH). 2 residues coordinate L-tyrosine: Tyr175 and Gln179. The 'KMSKS' region signature appears at 235-239 (KFGKT). Lys238 serves as a coordination point for ATP. The S4 RNA-binding domain maps to 357 to 414 (KDLQEALVLTSLAQSRTQAKNMIISNSISINTEKIRKNHIFHEKDKLFGKFTLLSRGK).

The protein belongs to the class-I aminoacyl-tRNA synthetase family. TyrS type 1 subfamily. As to quaternary structure, homodimer.

The protein localises to the cytoplasm. It catalyses the reaction tRNA(Tyr) + L-tyrosine + ATP = L-tyrosyl-tRNA(Tyr) + AMP + diphosphate + H(+). Functionally, catalyzes the attachment of tyrosine to tRNA(Tyr) in a two-step reaction: tyrosine is first activated by ATP to form Tyr-AMP and then transferred to the acceptor end of tRNA(Tyr). The protein is Tyrosine--tRNA ligase of Buchnera aphidicola subsp. Acyrthosiphon pisum (strain 5A).